The primary structure comprises 252 residues: Large ribosomal subunit protein uL4 (252 aa).

The protein belongs to the universal ribosomal protein uL4 family. As to quaternary structure, part of the 50S ribosomal subunit.

Its function is as follows. One of the primary rRNA binding proteins, this protein initially binds near the 5'-end of the 23S rRNA. It is important during the early stages of 50S assembly. It makes multiple contacts with different domains of the 23S rRNA in the assembled 50S subunit and ribosome. In terms of biological role, forms part of the polypeptide exit tunnel. This Archaeoglobus fulgidus (strain ATCC 49558 / DSM 4304 / JCM 9628 / NBRC 100126 / VC-16) protein is Large ribosomal subunit protein uL4.